Consider the following 427-residue polypeptide: Peptidase B (427 aa).

2 residues coordinate Mn(2+): Lys195 and Asp200. Lys207 is a catalytic residue. The Mn(2+) site is built by Asp218, Asp277, and Glu279. The active site involves Arg281.

The protein belongs to the peptidase M17 family. In terms of assembly, homohexamer. Requires Mn(2+) as cofactor.

The protein localises to the cytoplasm. It carries out the reaction Release of an N-terminal amino acid, Xaa, from a peptide or arylamide. Xaa is preferably Glu or Asp but may be other amino acids, including Leu, Met, His, Cys and Gln.. Functionally, probably plays an important role in intracellular peptide degradation. This is Peptidase B from Escherichia coli O139:H28 (strain E24377A / ETEC).